Reading from the N-terminus, the 158-residue chain is UPF0735 ACT domain-containing protein Bsph_3944 (158 aa).

The ACT domain occupies 80–155 (TVFLQLQDRK…FVESAEVISS (76 aa)).

The protein belongs to the UPF0735 family.

The protein is UPF0735 ACT domain-containing protein Bsph_3944 of Lysinibacillus sphaericus (strain C3-41).